The chain runs to 100 residues: Nucleoid-associated protein Rcas_2292 (100 aa).

Belongs to the YbaB/EbfC family. As to quaternary structure, homodimer.

It localises to the cytoplasm. The protein resides in the nucleoid. Its function is as follows. Binds to DNA and alters its conformation. May be involved in regulation of gene expression, nucleoid organization and DNA protection. This is Nucleoid-associated protein Rcas_2292 from Roseiflexus castenholzii (strain DSM 13941 / HLO8).